The sequence spans 447 residues: Neuronal acetylcholine receptor subunit alpha-10 (447 aa).

A signal peptide spans 1 to 24; the sequence is MGTRSHYLDLGFLLLLFLPAECLG. Topologically, residues 25 to 237 are extracellular; it reads AEGRLAHKLF…FTLLLRRRAA (213 aa). 2 N-linked (GlcNAc...) asparagine glycosylation sites follow: Asn-40 and Asn-56. Cystine bridges form between Cys-154–Cys-168 and Cys-218–Cys-219. Helical transmembrane passes span 238–258, 268–288, and 302–322; these read AYVCNLLLPCVFISLLAPLAF, VSLGVTVLLALTVFQLILAES, and YMATMTMVTFSTALTILIMNL. Residues 323 to 425 lie on the Cytoplasmic side of the membrane; sequence HYCGPNAHPV…WKRLARVMDR (103 aa). Residues 426–446 traverse the membrane as a helical segment; sequence FFLGIFFCMALVMSLIVLVQA.

This sequence belongs to the ligand-gated ion channel (TC 1.A.9) family. Acetylcholine receptor (TC 1.A.9.1) subfamily. Alpha-10/CHRNA10 sub-subfamily. Forms homo- or heterooligomeric channels in conjunction with CHRNA10. The native outer hair cell receptor may be composed of CHRNA9:CHRNA10 heterooligomers. Found in the stoichiometric form (CHRNA9)2:(CHRNA10)3. As to expression, expressed in the outer hair cells of the cochlea and the neurons of dorsal root ganglia.

The protein resides in the synaptic cell membrane. Its subcellular location is the cell membrane. The catalysed reaction is Ca(2+)(in) = Ca(2+)(out). It catalyses the reaction Mg(2+)(in) = Mg(2+)(out). It carries out the reaction K(+)(in) = K(+)(out). The enzyme catalyses Na(+)(in) = Na(+)(out). Its activity is regulated as follows. Activated by a myriad of ligands such as acetylcholine. AChR activity is inhibited by the antagonist alpha-conotoxins RgIA and GeXXA, small disulfide-constrained peptides from cone snails. Its function is as follows. Component of neuronal acetylcholine receptors (nAChRs) that function as pentameric, ligand-gated cation channels with high calcium permeability among other activities. nAChRs are excitatory neurotrasnmitter receptors formed by a collection of nAChR subunits known to mediate synaptic transmission in the nervous system and the neuromuscular junction. Each nAchR subunit confers differential attributes to channel properties, including activation, deactivation and desensitization kinetics, pH sensitivity, cation permeability, and binding to allosteric modulators. Forms heteropentamers with CHRNA9. Expressed in the inner ear, in sympathetic neurons and in other non-neuronal cells, such as skin keratinocytes and lymphocytes. nAChR formed by CHRNA9:CHRNA10 mediate central nervous system control of auditory and vestibular sensory processing. The channel is permeable to a range of divalent cations including calcium, the influx of which may activate a potassium current which hyperpolarizes the cell membrane. In the ear, mediates synaptic transmission between efferent olivocochlear fibers and hair cells of the cochlea, this may lead to a reduction in basilar membrane motion, altering the activity of auditory nerve fibers and reducing the range of dynamic hearing. This may protect against acoustic trauma. May also regulate keratinocyte adhesion. The sequence is that of Neuronal acetylcholine receptor subunit alpha-10 (Chrna10) from Rattus norvegicus (Rat).